Reading from the N-terminus, the 266-residue chain is MVRNPMASAVESTLKTKAQTSNLSFYYGAIQALKNIHLTLAEHRVTALIGPSGCGKTTYLRCFNRMHDLYPGNRYEGQILLYPDEVNIVGPEVDPIEVRMRVSMVFQKPNPFPKSVYENVAYGLRVRGVRNRAELDEKVERALRQAALWEEVKDRLASLAFNLSGGQQQRLCIARALASEPEIILFDEPTSALDPLATLKIEELMGKLKQSITILIVTHNMQQAARISDFTAFMYLGEVIESGQTNQMFDHPTNQLTEQYVAGHFG.

The region spanning 18-261 (AQTSNLSFYY…PTNQLTEQYV (244 aa)) is the ABC transporter domain. An ATP-binding site is contributed by 50–57 (GPSGCGKT).

It belongs to the ABC transporter superfamily. Phosphate importer (TC 3.A.1.7) family. The complex is composed of two ATP-binding proteins (PstB), two transmembrane proteins (PstC and PstA) and a solute-binding protein (PstS).

The protein resides in the cell inner membrane. It catalyses the reaction phosphate(out) + ATP + H2O = ADP + 2 phosphate(in) + H(+). Part of the ABC transporter complex PstSACB involved in phosphate import. Responsible for energy coupling to the transport system. This is Phosphate import ATP-binding protein PstB 1 from Gloeobacter violaceus (strain ATCC 29082 / PCC 7421).